The chain runs to 785 residues: Protein SEY1 (785 aa).

The tract at residues 1 to 31 (MASAAPINLRAQDTPYVPPTSLPTSSSQTGS) is disordered. Over 1–689 (MASAAPINLR…KRSTVASIAQ (689 aa)) the chain is Cytoplasmic. Residues 22-31 (LPTSSSQTGS) show a composition bias toward low complexity. Residues 61-281 (GFSYNIVAVF…SSDYLFKPAY (221 aa)) enclose the GB1/RHD3-type G domain. 71-78 (GSQSTGKS) contacts GTP. Residues 458–482 (SWEEELELLRDEIRAVADQCRKDET) adopt a coiled-coil conformation. Residues 690–710 (IPYWIYGVLVVLGWNEAMLVL) traverse the membrane as a helical segment. At 711–713 (FNP) the chain is on the lumenal side. The helical transmembrane segment at 714–734 (LYFAFLLLAMATSYIIAQLGL) threads the bilayer. Over 735–785 (VGPLFQVTRTVGSEIQRQATARLREHFSQPVLAEPVQVGPSRDREEVGQIQ) the chain is Cytoplasmic.

Belongs to the TRAFAC class dynamin-like GTPase superfamily. GB1/RHD3 GTPase family. RHD3 subfamily.

It is found in the endoplasmic reticulum membrane. Cooperates with the reticulon proteins and tubule-shaping DP1 family proteins to generate and maintain the structure of the tubular endoplasmic reticulum network. Has GTPase activity, which is required for its function in ER organization. The polypeptide is Protein SEY1 (Laccaria bicolor (strain S238N-H82 / ATCC MYA-4686) (Bicoloured deceiver)).